The following is a 381-amino-acid chain: cAMP-dependent protein kinase type I-beta regulatory subunit (381 aa).

Residues 1–136 (MASPSCFHSE…ALAKAISKNV (136 aa)) form a dimerization and phosphorylation region. Ser3 carries the post-translational modification Phosphoserine. Tyr21 bears the 3'-nitrotyrosine mark. The interval 66-88 (LARQKSNSQCDSHDEEISPTPPN) is disordered. A phosphoserine mark is found at Ser77 and Ser83. Thr85 carries the phosphothreonine modification. A Pseudophosphorylation motif motif is present at residues 96–100 (RRGGV). Arg97 carries the omega-N-methylarginine modification. 3',5'-cyclic AMP-binding positions include 137 to 254 (LFSH…SKVS), Glu202, Arg211, 255 to 381 (ILES…SLTV), Glu326, and Arg335.

The protein belongs to the cAMP-dependent kinase regulatory chain family. As to quaternary structure, the inactive holoenzyme is composed of two regulatory chains and two catalytic chains. Activation by cAMP releases the two active catalytic monomers and the regulatory dimer. Interacts with PRKX; regulates this cAMP-dependent protein kinase. Interacts with smAKAP; this interaction may target PRKAR1B to the plasma membrane. In terms of processing, the pseudophosphorylation site binds to the substrate-binding region of the catalytic chain, resulting in the inhibition of its activity. Abundant in brain and testis. No expression in lung, heart, liver, spleen, kidney and skeletal muscle.

It localises to the cell membrane. Its function is as follows. Regulatory subunit of the cAMP-dependent protein kinases involved in cAMP signaling in cells. The sequence is that of cAMP-dependent protein kinase type I-beta regulatory subunit (Prkar1b) from Rattus norvegicus (Rat).